The following is a 101-amino-acid chain: Small ribosomal subunit protein eS24 (101 aa).

It belongs to the eukaryotic ribosomal protein eS24 family.

This chain is Small ribosomal subunit protein eS24, found in Methanosarcina acetivorans (strain ATCC 35395 / DSM 2834 / JCM 12185 / C2A).